The sequence spans 275 residues: Phosphate import ATP-binding protein PstB (275 aa).

The 242-residue stretch at 29–270 (VSVRDLNFYY…PTDRRTQDYI (242 aa)) folds into the ABC transporter domain. 61-68 (GPSGCGKS) is a binding site for ATP.

It belongs to the ABC transporter superfamily. Phosphate importer (TC 3.A.1.7) family. As to quaternary structure, the complex is composed of two ATP-binding proteins (PstB), two transmembrane proteins (PstC and PstA) and a solute-binding protein (PstS).

It is found in the cell inner membrane. It carries out the reaction phosphate(out) + ATP + H2O = ADP + 2 phosphate(in) + H(+). Functionally, part of the ABC transporter complex PstSACB involved in phosphate import. Responsible for energy coupling to the transport system. The chain is Phosphate import ATP-binding protein PstB from Rhodopseudomonas palustris (strain BisB18).